A 274-amino-acid polypeptide reads, in one-letter code: WIMGHMVNAIEQVDEFLNLGANAIEFDIDFDKDGIAQITHHGIPCDCGRKCTKKAIFTEYLDNIRQVTTPDDPKFREQLVLLALDLKLQRISSAKAYRAGEDVAKKLLDHYWQRGNSRARAYILLNIPSVEDYEFIRAFKDTLKNEGYESYNDKVGINFTGNEDLDKIRDVLEILGIHKQVWQADGITSCFARGTERLKEALEKRDTPGYNYINKVYAWTLVRKSIMRRSLRLGVDGVMSNNPDRVIKVLKEKEFADKFRLATYNDNPWEKFRG.

Histidine 5 is a catalytic residue. Residues glutamate 25 and aspartate 27 each coordinate Mg(2+). Histidine 41 functions as the Nucleophile in the catalytic mechanism. 2 disulfides stabilise this stretch: cysteine 45–cysteine 51 and cysteine 47–cysteine 190. Position 85 (aspartate 85) interacts with Mg(2+).

It belongs to the arthropod phospholipase D family. Class II subfamily. It depends on Mg(2+) as a cofactor. In terms of tissue distribution, expressed by the venom gland.

It localises to the secreted. The enzyme catalyses an N-(acyl)-sphingosylphosphocholine = an N-(acyl)-sphingosyl-1,3-cyclic phosphate + choline. It catalyses the reaction an N-(acyl)-sphingosylphosphoethanolamine = an N-(acyl)-sphingosyl-1,3-cyclic phosphate + ethanolamine. It carries out the reaction a 1-acyl-sn-glycero-3-phosphocholine = a 1-acyl-sn-glycero-2,3-cyclic phosphate + choline. The catalysed reaction is a 1-acyl-sn-glycero-3-phosphoethanolamine = a 1-acyl-sn-glycero-2,3-cyclic phosphate + ethanolamine. In terms of biological role, dermonecrotic toxins cleave the phosphodiester linkage between the phosphate and headgroup of certain phospholipids (sphingolipid and lysolipid substrates), forming an alcohol (often choline) and a cyclic phosphate. This toxin acts on sphingomyelin (SM). It may also act on ceramide phosphoethanolamine (CPE), lysophosphatidylcholine (LPC) and lysophosphatidylethanolamine (LPE), but not on lysophosphatidylserine (LPS), and lysophosphatidylglycerol (LPG). It acts by transphosphatidylation, releasing exclusively cyclic phosphate products as second products. Induces dermonecrosis, hemolysis, increased vascular permeability, edema, inflammatory response, and platelet aggregation. The protein is Dermonecrotic toxin SdSicTox-betaIIB1bii of Sicarius cf. damarensis (strain GJB-2008) (Six-eyed sand spider).